We begin with the raw amino-acid sequence, 88 residues long: Small ribosomal subunit protein bS20 (88 aa).

Belongs to the bacterial ribosomal protein bS20 family.

Binds directly to 16S ribosomal RNA. The protein is Small ribosomal subunit protein bS20 of Nitrobacter winogradskyi (strain ATCC 25391 / DSM 10237 / CIP 104748 / NCIMB 11846 / Nb-255).